Consider the following 128-residue polypeptide: Flagellar assembly factor FliW (128 aa).

This sequence belongs to the FliW family. Interacts with translational regulator CsrA and flagellin(s).

The protein localises to the cytoplasm. Functionally, acts as an anti-CsrA protein, binds CsrA and prevents it from repressing translation of its target genes, one of which is flagellin. Binds to flagellin and participates in the assembly of the flagellum. This Campylobacter fetus subsp. fetus (strain 82-40) protein is Flagellar assembly factor FliW.